The sequence spans 1385 residues: Contactin-associated protein 1 (1385 aa).

The N-terminal stretch at 1-20 (MMSLRLFSILLATVVSGAWG) is a signal peptide. Over 21-1284 (WGYYGCNEEL…PYYHDDGWIA (1264 aa)) the chain is Extracellular. Residues 26–169 (CNEELVGPLY…IGLRLGIYGC (144 aa)) form the F5/8 type C domain. A disulfide bond links C26 and C169. Residues N121, N129, and N277 are each glycosylated (N-linked (GlcNAc...) asparagine). Laminin G-like domains are found at residues 204–356 (FKTE…AFRC) and 390–539 (FRTW…FDTC). Residues C324 and C356 are joined by a disulfide bond. N421, N500, and N519 each carry an N-linked (GlcNAc...) asparagine glycan. 4 disulfides stabilise this stretch: C507–C539, C545–C556, C550–C565, and C567–C577. In terms of domain architecture, EGF-like 1 spans 545-577 (CSPNMCEHDGRCYQSWDDFICYCELTGYKGVTC). In terms of domain architecture, Fibrinogen C-terminal spans 577 to 796 (CHEPLYKESC…NTISFHTGAA (220 aa)). Residues N598, N654, N665, N764, N805, N844, N861, N949, and N957 are each glycosylated (N-linked (GlcNAc...) asparagine). The Laminin G-like 3 domain maps to 814 to 958 (FRTSAPSGVF…NASEGTFPNC (145 aa)). Cystine bridges form between C931-C958, C962-C975, C969-C984, and C986-C996. In terms of domain architecture, EGF-like 2 spans 962–996 (CTHPRFPCFHGGRCVERYSYYTCDCDLTAFDGPYC). 2 N-linked (GlcNAc...) asparagine glycosylation sites follow: N1079 and N1148. A Laminin G-like 4 domain is found at 1089 to 1251 (FSTNSAPAVL…VQGELSESNC (163 aa)). C1210 and C1251 form a disulfide bridge. A helical membrane pass occupies residues 1285–1305 (ILLGFLVAFLLLGLVGMLVLF). Residues 1306-1385 (YLQNHRYKGS…PQILEESRSE (80 aa)) lie on the Cytoplasmic side of the membrane. Residues 1317–1385 (HTNEPKATHD…PQILEESRSE (69 aa)) are disordered. Residues 1319–1329 (NEPKATHDSHP) are compositionally biased toward basic and acidic residues. The span at 1334 to 1367 (PLPPSGPAQAPAPTPAPTQLPTPAPAPAPAPASG) shows a compositional bias: pro residues. An SH3-binding motif is present at residues 1334–1370 (PLPPSGPAQAPAPTPAPTQLPTPAPAPAPAPASGPGP). S1384 is modified (phosphoserine).

The protein belongs to the neurexin family. As to quaternary structure, interacts with CNTN1/contactin in cis form. In terms of tissue distribution, expressed in brain. In myelinated nerve fibers predominantly found in paranodal axoglial junctions. In the internodal region of myelinated axons in the CNS and the PNS also found as a thin line apposing the inner mesaxon of the myelin sheath. In PNS neurons this line forms a circumferential ring that apposes the innermost aspect of Schmidt-Lanterman incisures.

Its subcellular location is the membrane. It localises to the cell junction. It is found in the paranodal septate junction. Required, with CNTNAP2, for radial and longitudinal organization of myelinated axons. Plays a role in the formation of functional distinct domains critical for saltatory conduction of nerve impulses in myelinated nerve fibers. Demarcates the paranodal region of the axo-glial junction. In association with contactin involved in the signaling between axons and myelinating glial cells. The chain is Contactin-associated protein 1 (Cntnap1) from Mus musculus (Mouse).